The following is a 965-amino-acid chain: UvrABC system protein A (965 aa).

Position 32-39 (32-39) interacts with ATP; sequence GLSGSGKS. A C4-type zinc finger spans residues 254-281; the sequence is CPVCDYSLPELEPRLFSFNAPMGACPAC. ABC transporter domains are found at residues 311–588 and 608–937; these read WDRR…PRSL and PNAT…HFLA. 641 to 648 lines the ATP pocket; that stretch reads GVSGSGKS. The segment at 740–766 adopts a C4-type zinc-finger fold; the sequence is CEACEGDGLIKVEMHFLPDVYVPCDIC.

Belongs to the ABC transporter superfamily. UvrA family. In terms of assembly, forms a heterotetramer with UvrB during the search for lesions.

It localises to the cytoplasm. Functionally, the UvrABC repair system catalyzes the recognition and processing of DNA lesions. UvrA is an ATPase and a DNA-binding protein. A damage recognition complex composed of 2 UvrA and 2 UvrB subunits scans DNA for abnormalities. When the presence of a lesion has been verified by UvrB, the UvrA molecules dissociate. This is UvrABC system protein A from Xylella fastidiosa (strain Temecula1 / ATCC 700964).